A 181-amino-acid polypeptide reads, in one-letter code: Inner membrane-spanning protein YciB (181 aa).

Helical transmembrane passes span 3-23 (FLFDLFPVILFFITFKIYGIY), 49-69 (TMLWVSLVLIVVFGSATLILQ), 76-96 (WKPSVLYWLFAAALLIAQAIF), 119-139 (VNASWAAFFAFMGAANLYVAF), and 149-169 (FKLFGFMGLMLVFVVLQGLML).

Belongs to the YciB family.

The protein resides in the cell inner membrane. In terms of biological role, plays a role in cell envelope biogenesis, maintenance of cell envelope integrity and membrane homeostasis. This is Inner membrane-spanning protein YciB from Nitrosospira multiformis (strain ATCC 25196 / NCIMB 11849 / C 71).